A 128-amino-acid polypeptide reads, in one-letter code: MFYSIVAIFVGAGLGALLRWCLSLTLNAFFPAVPLGTLAANLLGGYVIGVAAVVFTVRVGLPPEWRLFVITGFLGGLTTFSTYSVEVMTHALEGEFGWALAVAALHLTGSFALTALGMWTARAWLAAA.

Transmembrane regions (helical) follow at residues 2-22 (FYSI…RWCL), 35-55 (LGTL…AVVF), 67-87 (LFVI…SVEV), and 96-116 (FGWA…LTAL). Na(+) contacts are provided by Gly75 and Thr78.

Belongs to the fluoride channel Fluc/FEX (TC 1.A.43) family.

Its subcellular location is the cell inner membrane. The enzyme catalyses fluoride(in) = fluoride(out). Its activity is regulated as follows. Na(+) is not transported, but it plays an essential structural role and its presence is essential for fluoride channel function. Functionally, fluoride-specific ion channel. Important for reducing fluoride concentration in the cell, thus reducing its toxicity. The protein is Fluoride-specific ion channel FluC of Burkholderia cenocepacia (strain ATCC BAA-245 / DSM 16553 / LMG 16656 / NCTC 13227 / J2315 / CF5610) (Burkholderia cepacia (strain J2315)).